Reading from the N-terminus, the 246-residue chain is Acetoacetate decarboxylase (246 aa).

Catalysis depends on Lys-116, which acts as the Schiff-base intermediate with acetoacetate.

Belongs to the ADC family.

The catalysed reaction is acetoacetate + H(+) = acetone + CO2. Catalyzes the conversion of acetoacetate to acetone and carbon dioxide. The protein is Acetoacetate decarboxylase of Burkholderia cenocepacia (strain HI2424).